A 319-amino-acid polypeptide reads, in one-letter code: Biotin synthase (319 aa).

The Radical SAM core domain maps to 41-267 (YKGNKVKVCS…TPDIMICGGR (227 aa)). 3 residues coordinate [4Fe-4S] cluster: C59, C63, and C66. C192 is a [2Fe-2S] cluster binding site.

Belongs to the radical SAM superfamily. Biotin synthase family. As to quaternary structure, homodimer. [4Fe-4S] cluster is required as a cofactor. Requires [2Fe-2S] cluster as cofactor.

It catalyses the reaction (4R,5S)-dethiobiotin + (sulfur carrier)-SH + 2 reduced [2Fe-2S]-[ferredoxin] + 2 S-adenosyl-L-methionine = (sulfur carrier)-H + biotin + 2 5'-deoxyadenosine + 2 L-methionine + 2 oxidized [2Fe-2S]-[ferredoxin]. It participates in cofactor biosynthesis; biotin biosynthesis; biotin from 7,8-diaminononanoate: step 2/2. Its function is as follows. Catalyzes the conversion of dethiobiotin (DTB) to biotin by the insertion of a sulfur atom into dethiobiotin via a radical-based mechanism. The sequence is that of Biotin synthase from Endomicrobium trichonymphae.